We begin with the raw amino-acid sequence, 535 residues long: Reticuline oxidase (535 aa).

Residues 1–23 (MMCRSLTLRFFLFIVLLQTCVRG) form the signal peptide. N-linked (GlcNAc...) asparagine glycosylation occurs at Asn-42. Residues 71–245 (TVSKPSFIVM…YAWKIKLLPV (175 aa)) form the FAD-binding PCMH-type domain. The 6-(S-cysteinyl)-8alpha-(pros-histidyl)-FAD (His-Cys) cross-link spans 108–170 (HSYEGLSYTA…DTLGFTAGWC (63 aa)). N-linked (GlcNAc...) asparagine glycosylation is present at Asn-475.

It belongs to the oxygen-dependent FAD-linked oxidoreductase family. The cofactor is FAD. A metal cation serves as cofactor. Post-translationally, the FAD cofactor is bound via a bicovalent 6-S-cysteinyl, 8alpha-N1-histidyl FAD linkage. As to expression, expressed in roots and stems. Not detected in leaves or reproductive organs. Restricted to the parietal region of sieve elements adjacent or proximal to laticifers.

Its subcellular location is the cytoplasmic vesicle. It catalyses the reaction (S)-reticuline + O2 = (S)-scoulerine + H2O2 + H(+). It functions in the pathway alkaloid biosynthesis; (S)-scoulerine biosynthesis; (S)-scoulerine from (S)-reticuline: step 1/1. In terms of biological role, oxygen-dependent FAD-dependent oxidoreductase essential to the formation of benzophenanthridine alkaloids in the response of plants to pathogenic attack. Catalyzes the stereospecific conversion of the N-methyl moiety of (S)-reticuline into the berberine bridge carbon of (S)-scoulerine. Involved in the biosynthesis of sanguinarine. The sequence is that of Reticuline oxidase (BBE1) from Papaver somniferum (Opium poppy).